We begin with the raw amino-acid sequence, 541 residues long: Propionate catabolism operon regulatory protein (541 aa).

In terms of domain architecture, Sigma-54 factor interaction spans 221-464; that stretch reads IRGQSPQMEQ…RNMMERLALF (244 aa). 321-330 serves as a coordination point for ATP; it reads AHGGTLFLDE. The H-T-H motif DNA-binding region spans 513 to 532; the sequence is KTAAARYLGISRTTLWRRLK.

Involved in the transcriptional regulation of the propionate catabolism operon. In Salmonella typhimurium (strain LT2 / SGSC1412 / ATCC 700720), this protein is Propionate catabolism operon regulatory protein (prpR).